The sequence spans 405 residues: Sesquiterpene synthase 16 (405 aa).

Mg(2+) contacts are provided by Asp-155, Asp-159, and Glu-309. The short motif at 155–159 (DDTYD) is the DDXXD motif element.

This sequence belongs to the terpene synthase family. Tpsa subfamily. Requires Mg(2+) as cofactor. Mn(2+) is required as a cofactor.

Its pathway is secondary metabolite biosynthesis; terpenoid biosynthesis. Its function is as follows. Sesquiterpene synthase involved in the biosynthesis of volatile compounds. No activity detected with geranyl diphosphate (GPP) and farnesyl diphosphate (FPP) as substrates. The polypeptide is Sesquiterpene synthase 16 (Solanum habrochaites (Wild tomato)).